Consider the following 434-residue polypeptide: Serine hydroxymethyltransferase (434 aa).

Residues leucine 128 and 132–134 each bind (6S)-5,6,7,8-tetrahydrofolate; that span reads GHL. An N6-(pyridoxal phosphate)lysine modification is found at lysine 237.

It belongs to the SHMT family. In terms of assembly, homodimer. The cofactor is pyridoxal 5'-phosphate.

Its subcellular location is the cytoplasm. It catalyses the reaction (6R)-5,10-methylene-5,6,7,8-tetrahydrofolate + glycine + H2O = (6S)-5,6,7,8-tetrahydrofolate + L-serine. It participates in one-carbon metabolism; tetrahydrofolate interconversion. Its pathway is amino-acid biosynthesis; glycine biosynthesis; glycine from L-serine: step 1/1. Its function is as follows. Catalyzes the reversible interconversion of serine and glycine with tetrahydrofolate (THF) serving as the one-carbon carrier. This reaction serves as the major source of one-carbon groups required for the biosynthesis of purines, thymidylate, methionine, and other important biomolecules. Also exhibits THF-independent aldolase activity toward beta-hydroxyamino acids, producing glycine and aldehydes, via a retro-aldol mechanism. This chain is Serine hydroxymethyltransferase, found in Corynebacterium glutamicum (strain R).